A 221-amino-acid polypeptide reads, in one-letter code: Imidazoleglycerol-phosphate dehydratase (221 aa).

This sequence belongs to the imidazoleglycerol-phosphate dehydratase family.

It carries out the reaction D-erythro-1-(imidazol-4-yl)glycerol 3-phosphate = 3-(imidazol-4-yl)-2-oxopropyl phosphate + H2O. Its pathway is amino-acid biosynthesis; L-histidine biosynthesis; L-histidine from 5-phospho-alpha-D-ribose 1-diphosphate: step 6/9. This Kluyveromyces lactis (strain ATCC 8585 / CBS 2359 / DSM 70799 / NBRC 1267 / NRRL Y-1140 / WM37) (Yeast) protein is Imidazoleglycerol-phosphate dehydratase (HIS3).